The chain runs to 583 residues: Afadin- and alpha-actinin-binding protein (583 aa).

Coiled coils occupy residues 108–220 (NNVE…LAIE), 255–333 (DYEA…QLTN), and 420–453 (EEKE…AIRL). A disordered region spans residues 285 to 328 (LSPCPPLNRGGSAEESQELGDSDREERSAETSRETLDQSCEHAR). The span at 305–328 (DSDREERSAETSRETLDQSCEHAR) shows a compositional bias: basic and acidic residues. Positions 480 to 527 (DRMRSSSSDGQSALSVKSEPEIRTSSSKAPPVKSSAYTTFSTPKSSKS) are disordered. Positions 484–494 (SSSSDGQSALS) are enriched in polar residues. Positions 504–515 (SSSKAPPVKSSA) are enriched in low complexity. A compositionally biased stretch (polar residues) spans 516 to 527 (YTTFSTPKSSKS).

It belongs to the ADIP family.

The protein resides in the cell junction. It is found in the adherens junction. It localises to the cytoplasm. The protein localises to the cytoskeleton. Its subcellular location is the microtubule organizing center. The protein resides in the centrosome. It is found in the centriolar satellite. In terms of biological role, belongs to an adhesion system, which plays a role in the organization of homotypic, interneuronal and heterotypic cell-cell adherens junctions (AJs). Involved in cell movement. Acts as a centrosome maturation factor, probably by maintaining the integrity of the pericentriolar material and proper microtubule nucleation at mitotic spindle poles. This is Afadin- and alpha-actinin-binding protein (ssx2ip) from Oryzias latipes (Japanese rice fish).